The sequence spans 297 residues: MSWQQVAIDADSRIAERFADTLMELGALSTAIEDAAAGTEFEQPIFGEPGEPVDRLWEQSRIIVLFAADADVAMLIAAAAGEAGMPTPVYTVEAVESQDWVRLTQSQFDPIRISGRLWITPTWHDAPDANAINLALDPGLAFGTGSHPTTRLCLQWLDANICGGESVLDYGCGSGILAIAAIKLGATDVTGIDIDPQAVQASRDNAVQNQVTAAFGLPDTLEDGRQFDVLVANILANPLRMLGDLLASHVRAGGRIVLSGILEEQAQELSELYSAWFEMDPPVFDEGWTRLSGVRRA.

The S-adenosyl-L-methionine site is built by T150, G171, D193, and N233.

This sequence belongs to the methyltransferase superfamily. PrmA family.

Its subcellular location is the cytoplasm. It carries out the reaction L-lysyl-[protein] + 3 S-adenosyl-L-methionine = N(6),N(6),N(6)-trimethyl-L-lysyl-[protein] + 3 S-adenosyl-L-homocysteine + 3 H(+). Its function is as follows. Methylates ribosomal protein L11. This Laribacter hongkongensis (strain HLHK9) protein is Ribosomal protein L11 methyltransferase.